The following is a 93-amino-acid chain: Integration host factor subunit beta (93 aa).

The protein belongs to the bacterial histone-like protein family. Heterodimer of an alpha and a beta chain.

In terms of biological role, this protein is one of the two subunits of integration host factor, a specific DNA-binding protein that functions in genetic recombination as well as in transcriptional and translational control. This is Integration host factor subunit beta from Tolumonas auensis (strain DSM 9187 / NBRC 110442 / TA 4).